Consider the following 824-residue polypeptide: Serine/threonine-protein kinase SCH9 (824 aa).

Polar residues predominate over residues 1 to 23 (MMNFFTSKSSNQDTGFSSQHQHP). Disordered regions lie at residues 1–37 (MMNFFTSKSSNQDTGFSSQHQHPNGQNNGNNNSSTAG), 125–152 (NAGNVHGDTGGNSLQNSEDDNFSSSSTT), 221–272 (ESLG…SQLP), and 285–327 (THRS…SHPI). Low complexity predominate over residues 24-37 (NGQNNGNNNSSTAG). One can recognise a C2 domain in the interval 166 to 378 (QREAAAAAYG…LAHASQHQWH (213 aa)). A compositionally biased stretch (low complexity) spans 226–248 (INNNNNNNNNNQHNQNQHINNNN). 2 stretches are compositionally biased toward polar residues: residues 249–272 (ENTNPDAASQHHNNNSGWNGSQLP) and 286–302 (HRSSSQLDQLNSCSSVT). Low complexity predominate over residues 307–321 (RSSNSSSGSSNGPKN). One can recognise a Protein kinase domain in the interval 412-671 (FEVLRLLGKG…GRELRAHPFF (260 aa)). Residues 418–426 (LGKGTFGQV) and Lys-441 each bind ATP. The active-site Proton acceptor is Asp-538. Thr-570 bears the Phosphothreonine; by PKH1 or PKH2 mark. One can recognise an AGC-kinase C-terminal domain in the interval 672 to 748 (ADIDWEALKQ…VDESAIDEHV (77 aa)). Ser-711 carries the post-translational modification Phosphoserine; by TORC1. The residue at position 723 (Thr-723) is a Phosphothreonine; by TORC1. A Phosphoserine; by TORC1 modification is found at Ser-726. A Phosphothreonine; by TORC1 modification is found at Thr-737. Residues Ser-758 and Ser-765 each carry the phosphoserine; by TORC1 modification.

This sequence belongs to the protein kinase superfamily. AGC Ser/Thr protein kinase family. cAMP subfamily. Phosphorylated by TORC1 in nutrient-replete conditions and during mechanical stress.

The enzyme catalyses L-seryl-[protein] + ATP = O-phospho-L-seryl-[protein] + ADP + H(+). It catalyses the reaction L-threonyl-[protein] + ATP = O-phospho-L-threonyl-[protein] + ADP + H(+). With respect to regulation, activated by cAMP. In terms of biological role, protein kinase that is part of growth control pathway which is at least partially redundant with the cAMP pathway. Regulates both BCY1 phosphorylation and MPK1 activity. Regulates ribosome biogenesis, translation initiation, and entry into stationary phase in a TORC1-dependent manner. The protein is Serine/threonine-protein kinase SCH9 (SCH9) of Saccharomyces cerevisiae (strain ATCC 204508 / S288c) (Baker's yeast).